Here is a 384-residue protein sequence, read N- to C-terminus: Lipid-A-disaccharide synthase (384 aa).

It belongs to the LpxB family.

The catalysed reaction is 2-N,3-O-bis[(3R)-3-hydroxytetradecanoyl]-alpha-D-glucosaminyl 1-phosphate + UDP-2-N,3-O-bis[(3R)-3-hydroxytetradecanoyl]-alpha-D-glucosamine = lipid A disaccharide (E. coli) + UDP + H(+). It catalyses the reaction a lipid X + a UDP-2-N,3-O-bis[(3R)-3-hydroxyacyl]-alpha-D-glucosamine = a lipid A disaccharide + UDP + H(+). It participates in glycolipid biosynthesis; lipid IV(A) biosynthesis; lipid IV(A) from (3R)-3-hydroxytetradecanoyl-[acyl-carrier-protein] and UDP-N-acetyl-alpha-D-glucosamine: step 5/6. Condensation of UDP-2,3-diacylglucosamine and 2,3-diacylglucosamine-1-phosphate to form lipid A disaccharide, a precursor of lipid A, a phosphorylated glycolipid that anchors the lipopolysaccharide to the outer membrane of the cell. The sequence is that of Lipid-A-disaccharide synthase from Blochmanniella floridana.